A 754-amino-acid chain; its full sequence is MTILTHTLGFPRVGLRRELKKAQESYWAGNSTREALLAVGRELRARHWEQQKQAGIDLLPVGDFAWYDHVLTTSLLLGNVPARHQNNDGSVDIDTLFRIGRGRAPTGEPAAAAEMTKWFNTNYHYIVPEFSKGQQFRLTWTQLLEEVDEALALGHKIKPVLLGPVTYLWLGKVKGEPFDRLTLLKDILPVYQHVLAELAKRGIEWVQIDEPALVLELPQAWLDAFKPAYDALAGQVKLLLTTYFEGVTPNLDTIIALPVQGLHVDLIHGKDDVAELHQRLPVDWLLSAGLINGRNVWRADLTEKYAQINALVGKRALWVASSCSLLHSPIDLSVETRLDTEVKSWFAFALQKCGELALLRDALNSGETAALEEWSAPIQARRHSRRVHNAAVEKRLAAITAQDSQRENPYEVRAEAQRARFKLPAWPTTTIGSFPQTTEIRGLRLDFKKGNLDANNYRTGIAEHIKQAIIEQERLGLDVLVHGEAERNDMVEYFGEHLDGFVFTQNGWVQSYGSRCVKPPVVIGDISRPAPITVEWAKYAQSLTDKPVKGMLTGPVTILCWSFPREDVTRETIAKQIALALRDEVADLEAAGIGIIQIDEPALREGLPLRRSDWDAYLEWGVEAFRINAAVAKDETQIHTHMCYCEFNDIMDSIAALDADVITIETSRSDMELLESFEAFDYPNEIGPGVYDIHSPNVPSVEWIEALLKKAAQRIPAQRLWVNPDCGLKTRGWPETRAALANMVKAAHNLRQAK.

Residues 17–20 and Lys-117 each bind 5-methyltetrahydropteroyltri-L-glutamate; that span reads RELK. L-homocysteine-binding positions include 431–433 and Glu-484; that span reads IGS. L-methionine contacts are provided by residues 431-433 and Glu-484; that span reads IGS. Residues 515–516 and Trp-561 each bind 5-methyltetrahydropteroyltri-L-glutamate; that span reads RC. Asp-599 is an L-homocysteine binding site. Asp-599 is an L-methionine binding site. Residue Glu-605 coordinates 5-methyltetrahydropteroyltri-L-glutamate. Zn(2+) contacts are provided by His-641, Cys-643, and Glu-665. The active-site Proton donor is the His-694. Position 726 (Cys-726) interacts with Zn(2+).

It belongs to the vitamin-B12 independent methionine synthase family. The cofactor is Zn(2+).

The enzyme catalyses 5-methyltetrahydropteroyltri-L-glutamate + L-homocysteine = tetrahydropteroyltri-L-glutamate + L-methionine. The protein operates within amino-acid biosynthesis; L-methionine biosynthesis via de novo pathway; L-methionine from L-homocysteine (MetE route): step 1/1. Catalyzes the transfer of a methyl group from 5-methyltetrahydrofolate to homocysteine resulting in methionine formation. The polypeptide is 5-methyltetrahydropteroyltriglutamate--homocysteine methyltransferase (Salmonella agona (strain SL483)).